The primary structure comprises 260 residues: Dolichol-phosphate mannosyltransferase subunit 1 (260 aa).

The interval 1-25 (MASTGASRSLAASPRPPQGRSSRQD) is disordered. Ala-2 is modified (N-acetylalanine). 2 positions are modified to phosphoserine: Ser-3 and Ser-9. GDP-alpha-D-mannose contacts are provided by Pro-32, Tyr-34, Glu-36, Ile-63, Asp-65, Asp-118, Ala-119, Asp-120, Arg-147, Arg-234, and Lys-240. Mg(2+) is bound at residue Asp-120. A Mn(2+)-binding site is contributed by Asp-120.

It belongs to the glycosyltransferase 2 family. As to quaternary structure, component of the dolichol-phosphate mannose (DPM) synthase complex composed of DPM1, DPM2 and DPM3; within the complex, directly interacts with DPM3. This interaction may stabilize DPM1. The cofactor is Mg(2+). It depends on Mn(2+) as a cofactor. Requires Ca(2+) as cofactor.

The protein localises to the endoplasmic reticulum. The catalysed reaction is a di-trans,poly-cis-dolichyl phosphate + GDP-alpha-D-mannose = a di-trans,poly-cis-dolichyl beta-D-mannosyl phosphate + GDP. Its pathway is protein modification; protein glycosylation. Its function is as follows. Transfers mannose from GDP-mannose to dolichol monophosphate to form dolichol phosphate mannose (Dol-P-Man) which is the mannosyl donor in pathways leading to N-glycosylation, glycosyl phosphatidylinositol membrane anchoring, and O-mannosylation of proteins; catalytic subunit of the dolichol-phosphate mannose (DPM) synthase complex. The polypeptide is Dolichol-phosphate mannosyltransferase subunit 1 (Dpm1) (Mus musculus (Mouse)).